A 438-amino-acid chain; its full sequence is Proline--tRNA ligase (438 aa).

Belongs to the class-II aminoacyl-tRNA synthetase family. ProS type 2 subfamily. As to quaternary structure, homodimer.

The protein localises to the cytoplasm. The enzyme catalyses tRNA(Pro) + L-proline + ATP = L-prolyl-tRNA(Pro) + AMP + diphosphate. Functionally, catalyzes the attachment of proline to tRNA(Pro) in a two-step reaction: proline is first activated by ATP to form Pro-AMP and then transferred to the acceptor end of tRNA(Pro). In Gluconobacter oxydans (strain 621H) (Gluconobacter suboxydans), this protein is Proline--tRNA ligase.